Reading from the N-terminus, the 402-residue chain is Acetate kinase (402 aa).

Asparagine 7 contributes to the Mg(2+) binding site. Lysine 14 provides a ligand contact to ATP. Arginine 95 contributes to the substrate binding site. Aspartate 152 acts as the Proton donor/acceptor in catalysis. ATP contacts are provided by residues 212 to 216 (HLGNG), 286 to 288 (DMR), and 334 to 338 (GIGEN). Glutamate 388 lines the Mg(2+) pocket.

The protein belongs to the acetokinase family. As to quaternary structure, homodimer. The cofactor is Mg(2+). Requires Mn(2+) as cofactor.

The protein localises to the cytoplasm. It catalyses the reaction acetate + ATP = acetyl phosphate + ADP. The protein operates within metabolic intermediate biosynthesis; acetyl-CoA biosynthesis; acetyl-CoA from acetate: step 1/2. Its function is as follows. Catalyzes the formation of acetyl phosphate from acetate and ATP. Can also catalyze the reverse reaction. The sequence is that of Acetate kinase from Oleidesulfovibrio alaskensis (strain ATCC BAA-1058 / DSM 17464 / G20) (Desulfovibrio alaskensis).